The sequence spans 292 residues: G1/S-specific cyclin-D3 (292 aa).

Residues 27-152 (VLQSLLRLEE…LVLGKLKWDL (126 aa)) form the Cyclin N-terminal domain. The tract at residues 256–292 (REAAQTAPSPVPKAPRGSSSQGPSQTSTPTDVTAIHL) is disordered. A phosphoserine mark is found at S264 and S279. Low complexity predominate over residues 272–285 (GSSSQGPSQTSTPT). At T283 the chain carries Phosphothreonine.

It belongs to the cyclin family. Cyclin D subfamily. In terms of assembly, interacts with the CDK4 and CDK6 protein kinases to form a serine/threonine kinase holoenzyme complex. The cyclin subunit imparts substrate specificity to the complex. Interacts with ATF5. Interacts with EIF3K. Component of the ternary complex cyclin D/CDK4/CDKN1B required for nuclear translocation and modulation of CDK4-mediated kinase activity. Can form similar complexes with either CDKN1A or CDKN2A. Post-translationally, phosphorylation at Thr-283 by MAP kinases is required for ubiquitination and degradation by the DCX(AMBRA1) complex. In terms of processing, ubiquitinated by the DCX(AMBRA1) complex during the transition from G1 to S cell phase, leading to its degradation: ubiquitination is dependent on Thr-283 phosphorylation. The DCX(AMBRA1) complex represents the major regulator of CCND3 stability during the G1/S transition. Polyubiquitinated by the SCF(FBXL2) complex, leading to proteasomal degradation.

It is found in the nucleus. It localises to the cytoplasm. Regulatory component of the cyclin D3-CDK4 (DC) complex that phosphorylates and inhibits members of the retinoblastoma (RB) protein family including RB1 and regulates the cell-cycle during G(1)/S transition. Phosphorylation of RB1 allows dissociation of the transcription factor E2F from the RB/E2F complex and the subsequent transcription of E2F target genes which are responsible for the progression through the G(1) phase. Hypophosphorylates RB1 in early G(1) phase. Cyclin D-CDK4 complexes are major integrators of various mitogenenic and antimitogenic signals. Component of the ternary complex, cyclin D3/CDK4/CDKN1B, required for nuclear translocation and activity of the cyclin D-CDK4 complex. Shows transcriptional coactivator activity with ATF5 independently of CDK4. In Mus musculus (Mouse), this protein is G1/S-specific cyclin-D3.